The primary structure comprises 119 residues: V-type proton ATPase subunit F (119 aa).

It belongs to the V-ATPase F subunit family. In terms of assembly, V-ATPase is a heteromultimeric enzyme made up of two complexes: the ATP-hydrolytic V1 complex and the proton translocation V0 complex. The V1 complex consists of three catalytic AB heterodimers that form a heterohexamer, three peripheral stalks each consisting of EG heterodimers, one central rotor including subunits D and F, and the regulatory subunits C and H. The proton translocation complex V0 consists of the proton transport subunit a, a ring of proteolipid subunits c9c'', rotary subunit d, subunits e and f, and the accessory subunits ATP6AP1/Ac45 and ATP6AP2/PRR.

Its subcellular location is the cytoplasmic vesicle. It is found in the secretory vesicle. The protein resides in the synaptic vesicle membrane. The protein localises to the clathrin-coated vesicle membrane. In terms of biological role, subunit of the V1 complex of vacuolar(H+)-ATPase (V-ATPase), a multisubunit enzyme composed of a peripheral complex (V1) that hydrolyzes ATP and a membrane integral complex (V0) that translocates protons. V-ATPase is responsible for acidifying and maintaining the pH of intracellular compartments and in some cell types, is targeted to the plasma membrane, where it is responsible for acidifying the extracellular environment. This chain is V-type proton ATPase subunit F (Atp6v1f), found in Mus musculus (Mouse).